Reading from the N-terminus, the 328-residue chain is G2/mitotic-specific cyclin-2 (328 aa).

Belongs to the cyclin family. Cyclin AB subfamily. Interacts with the CDC2 protein kinase to form a serine/threonine kinase holoenzyme complex also known as maturation promoting factor (MPF). The cyclin subunit imparts substrate specificity to the complex. In terms of tissue distribution, only expressed in organs with dividing cells.

In terms of biological role, essential for the control of the cell cycle at the G2/M (mitosis) transition. This chain is G2/mitotic-specific cyclin-2, found in Medicago sativa (Alfalfa).